The sequence spans 546 residues: Glutamyl-tRNA(Gln) amidotransferase subunit A, chloroplastic/mitochondrial (546 aa).

The segment at 21-52 is disordered; the sequence is KRRRFHSSTPLFLSQPQTLASTDPPSSPPQSQ. Polar residues predominate over residues 27 to 43; the sequence is SSTPLFLSQPQTLASTD. Residues Lys123 and Ser198 each act as charge relay system in the active site. The Acyl-ester intermediate role is filled by Ser222.

The protein belongs to the amidase family. GatA subfamily. Subunit of the heterotrimeric GatCAB amidotransferase (AdT) complex, composed of A, B and C subunits.

The protein resides in the mitochondrion. It is found in the plastid. It localises to the chloroplast stroma. It catalyses the reaction L-glutamyl-tRNA(Gln) + L-glutamine + ATP + H2O = L-glutaminyl-tRNA(Gln) + L-glutamate + ADP + phosphate + H(+). In terms of biological role, allows the formation of correctly charged Gln-tRNA(Gln) through the transamidation of misacylated Glu-tRNA(Gln) in chloroplasts and mitochondria. The reaction takes place in the presence of glutamine and ATP through an activated gamma-phospho-Glu-tRNA(Gln). The polypeptide is Glutamyl-tRNA(Gln) amidotransferase subunit A, chloroplastic/mitochondrial (Vitis vinifera (Grape)).